A 112-amino-acid chain; its full sequence is Large ribosomal subunit protein bL17 (112 aa).

This sequence belongs to the bacterial ribosomal protein bL17 family. As to quaternary structure, part of the 50S ribosomal subunit. Contacts protein L32.

This Heliobacterium modesticaldum (strain ATCC 51547 / Ice1) protein is Large ribosomal subunit protein bL17.